Here is a 904-residue protein sequence, read N- to C-terminus: Phosphoenolpyruvate carboxylase (904 aa).

Positions 52–71 (ISRRESDAPPSTLSEQLTGR) are disordered. Active-site residues include His151 and Lys570.

Belongs to the PEPCase type 1 family. Requires Mg(2+) as cofactor.

It carries out the reaction oxaloacetate + phosphate = phosphoenolpyruvate + hydrogencarbonate. In terms of biological role, forms oxaloacetate, a four-carbon dicarboxylic acid source for the tricarboxylic acid cycle. The polypeptide is Phosphoenolpyruvate carboxylase (Xanthomonas oryzae pv. oryzae (strain MAFF 311018)).